The primary structure comprises 133 residues: MIQQQSRLSVADNTGARELLCIRVLGSTVGSKGLTKGGGNRRYAFVGDIVVAVVKDAAPNMGVKKSEVVRAVVVRTRQAIRRDNGMVIRFDDNAAVIIDKNGNPRGTRVFGPVARELREKNFTKIISLAPEVL.

Belongs to the universal ribosomal protein uL14 family. Part of the 50S ribosomal subunit. Forms a cluster with proteins L3 and L19. In the 70S ribosome, L14 and L19 interact and together make contacts with the 16S rRNA in bridges B5 and B8.

Functionally, binds to 23S rRNA. Forms part of two intersubunit bridges in the 70S ribosome. The sequence is that of Large ribosomal subunit protein uL14 from Gloeobacter violaceus (strain ATCC 29082 / PCC 7421).